A 229-amino-acid polypeptide reads, in one-letter code: Synaptogyrin-3 (229 aa).

Methionine 1 carries the post-translational modification N-acetylmethionine. Positions 20 to 172 (FARRPQTLLR…LTVKALQRFR (153 aa)) constitute an MARVEL domain. 4 consecutive transmembrane segments (helical) span residues 30 to 50 (VVSW…GYVN), 70 to 90 (FGVV…LLDV), 105 to 125 (VLLD…GFCF), and 148 to 168 (AAIA…VKAL). A compositionally biased stretch (polar residues) spans 209 to 223 (QSPPFTETLDTSSKG). The tract at residues 209–229 (QSPPFTETLDTSSKGYQVPAY) is disordered.

This sequence belongs to the synaptogyrin family. As to quaternary structure, interacts (via N-terminus) with SLC6A3 (via N-terminus). May interact with VMAT2. Specifically expressed in brain. Found in the brain across the dorsal and ventral corpus striatum as well as in the cortex.

The protein resides in the cytoplasmic vesicle. It localises to the secretory vesicle. The protein localises to the synaptic vesicle membrane. Its subcellular location is the synapse. Its function is as follows. May play a role in regulated exocytosis. May indirectly regulate the activity of the plasma membrane dopamine transporter SLC6A3 and thereby regulate dopamine transport back from the synaptic cleft into the presynaptic terminal. The protein is Synaptogyrin-3 of Mus musculus (Mouse).